The sequence spans 69 residues: Sec-independent protein translocase protein TatA (69 aa).

Residues 1–21 (MFGLGTMEMVIILVIVLVIFG) traverse the membrane as a helical segment. Residues 44 to 69 (NAEDDAPAEPEVSKPAAAESTEKKDA) form a disordered region.

The protein belongs to the TatA/E family. The Tat system comprises two distinct complexes: a TatABC complex, containing multiple copies of TatA, TatB and TatC subunits, and a separate TatA complex, containing only TatA subunits. Substrates initially bind to the TatABC complex, which probably triggers association of the separate TatA complex to form the active translocon.

The protein localises to the cell inner membrane. Part of the twin-arginine translocation (Tat) system that transports large folded proteins containing a characteristic twin-arginine motif in their signal peptide across membranes. TatA could form the protein-conducting channel of the Tat system. The polypeptide is Sec-independent protein translocase protein TatA (Magnetococcus marinus (strain ATCC BAA-1437 / JCM 17883 / MC-1)).